The chain runs to 156 residues: Low-salt glycan biosynthesis protein Agl8 (156 aa).

Substrate contacts are provided by residues Arg14–Ile15 and Arg47. The Nudix hydrolase domain occupies Ala25–Asp156. 3 residues coordinate Mg(2+): Gly60, Glu80, and Gln130. Residues Gly61–Gly82 carry the Nudix box motif.

This sequence belongs to the Nudix hydrolase family. It depends on Mg(2+) as a cofactor.

Its pathway is protein modification; protein glycosylation. It participates in cell surface structure biogenesis; S-layer biogenesis. Its function is as follows. Nudix hydrolase involved in N-glycan biosynthetic pathway that takes place under low-salt conditions (1.75 M instead of 3.4 M). Participates in the formation of the tetrasaccharide present at 'Asn-532' of S-layer glycoprotein Csg, consisting of a sulfated hexose, 2 hexoses and rhamnose. Mediates attachment of sugar 3 in the tetrasaccharide. The protein is Low-salt glycan biosynthesis protein Agl8 (agl8) of Haloferax volcanii (strain ATCC 29605 / DSM 3757 / JCM 8879 / NBRC 14742 / NCIMB 2012 / VKM B-1768 / DS2) (Halobacterium volcanii).